Reading from the N-terminus, the 195-residue chain is Protein GrpE (195 aa).

The segment at 1–30 (MSEQEKVEQEEISAELETQNEQEKPMEETE) is disordered. The segment covering 10 to 20 (EEISAELETQN) has biased composition (acidic residues).

The protein belongs to the GrpE family. As to quaternary structure, homodimer.

It is found in the cytoplasm. Its function is as follows. Participates actively in the response to hyperosmotic and heat shock by preventing the aggregation of stress-denatured proteins, in association with DnaK and GrpE. It is the nucleotide exchange factor for DnaK and may function as a thermosensor. Unfolded proteins bind initially to DnaJ; upon interaction with the DnaJ-bound protein, DnaK hydrolyzes its bound ATP, resulting in the formation of a stable complex. GrpE releases ADP from DnaK; ATP binding to DnaK triggers the release of the substrate protein, thus completing the reaction cycle. Several rounds of ATP-dependent interactions between DnaJ, DnaK and GrpE are required for fully efficient folding. This chain is Protein GrpE, found in Histophilus somni (strain 2336) (Haemophilus somnus).